The primary structure comprises 241 residues: 7-cyano-7-deazaguanine synthase (241 aa).

An ATP-binding site is contributed by 9-19 (LSGGLDSSTVL). The Zn(2+) site is built by Cys189, Cys197, Cys200, and Cys203.

It belongs to the QueC family. It depends on Zn(2+) as a cofactor.

It carries out the reaction 7-carboxy-7-deazaguanine + NH4(+) + ATP = 7-cyano-7-deazaguanine + ADP + phosphate + H2O + H(+). Its pathway is purine metabolism; 7-cyano-7-deazaguanine biosynthesis. Catalyzes the ATP-dependent conversion of 7-carboxy-7-deazaguanine (CDG) to 7-cyano-7-deazaguanine (preQ(0)). The polypeptide is 7-cyano-7-deazaguanine synthase (Thermoplasma volcanium (strain ATCC 51530 / DSM 4299 / JCM 9571 / NBRC 15438 / GSS1)).